A 152-amino-acid chain; its full sequence is Large ribosomal subunit protein uL13 (152 aa).

This sequence belongs to the universal ribosomal protein uL13 family. In terms of assembly, part of the 50S ribosomal subunit.

In terms of biological role, this protein is one of the early assembly proteins of the 50S ribosomal subunit, although it is not seen to bind rRNA by itself. It is important during the early stages of 50S assembly. The chain is Large ribosomal subunit protein uL13 from Neorickettsia sennetsu (strain ATCC VR-367 / Miyayama) (Ehrlichia sennetsu).